Consider the following 112-residue polypeptide: Mitochondrial import inner membrane translocase subunit TIM14-3 (112 aa).

An N-acetylalanine modification is found at Ala-2. Residues 6–28 (IAGAAVAAAAVAGRYGILAWQAF) traverse the membrane as a helical segment. One can recognise a J domain in the interval 53 to 112 (EAALILGVRESVVADKVKEAHRRVMVANHPDAGGSHYLASKINEAKDMMLGKSNNSGSAF).

Belongs to the TIM14 family. As to quaternary structure, probable component of the PAM complex at least composed of a mitochondrial HSP70 protein, TIMM44 and TIMM14. The complex interacts with the TIMM23 component of the TIM17:23 complex.

The protein resides in the mitochondrion. It localises to the mitochondrion inner membrane. Functionally, component of the PAM complex, a complex required for the translocation of transit peptide-containing proteins from the inner membrane into the mitochondrial matrix in an ATP-dependent manner. This Arabidopsis thaliana (Mouse-ear cress) protein is Mitochondrial import inner membrane translocase subunit TIM14-3 (TIM14-3).